Here is a 1371-residue protein sequence, read N- to C-terminus: MTEESSDVPRELIESIKDVIGRKIKISVKKKVKLEVKGDKVENKVLVLTSCRAFLVTARIPTKLELTFSYLEIHGVVCSKSAQMIVETEKCSISMKMASPEDVSEVLAHIGTCLRKIFPGLSPVRIMKKVSMEPSERLASLQALWDSQTVAEQGPCGGFSQMYACVCDWLGFSYREEVQWDVDTIYLTQDTRELNLQDFSHLDHRDLIPIIAALEYNQWFTKLSSKDLKLSTDVCEQILRVVSRSNRLEELVLENAGLRTDFAQKLASALAHNPNSGLHTINLAGNPLEDRGVSSLSIQFAKLPKGLKHLNLSKTSLSPKGVNSLSQSLSANPLTASTLVHLDLSGNVLRGDDLSHMYNFLAQPNAIVHLDLSNTECSLDMVCGALLRGCLQYLAVLNLSRTVFSHRKGKEVPPSFKQFFSSSLALMHINLSGTKLSPEPLKALLLGLACNHNLKGVSLDLSNCELRSGGAQVLEGCIAEIHNITSLDISDNGLESDLSTLIVWLSKNRSIQHLALGKNFNNMKSKNLTPVLDNLVQMIQDEESPLQSLSLADSKLKTEVTIIINALGSNTSLTKVDISGNGMGDMGAKMLAKALQINTKLRTVIWDKNNITAQGFQDIAVAMEKNYTLRFMPIPMYDASQALKTNPEKTEDALQKIENYLLRNHETRKYLQEQAYRLQQGIVTSTTQQMIDRICVKVQDHLNSLRNCGGDAIQEDLKSAERLMRDAKNSKTLLPNLYHVGGASWAGASGLLSSPIQETLESMAGEVTRVVDEQLKALLESMVDAAENLCPNVMKKAHIRQDLIHASTEKISIPRTFVKNVLLEQSGIDILNKISEVKLTVASFLSDRIVDEILDALSHCHHKLADHFSRRGKTLPQQESLEIELAEEKPVKRSIITVEELTEIERLEDLDTCMMTPKSKRKSIHSRMLRPVSRAFEMEFDLDKALEEVPIHIEDPPFPSLRQEKRSSGFISELPSEEGKKLEHFTKLRPKRNKKQQPTQAAVCAANIVSQDGEQNGLMGRVDEGVDEFFTKKVTKMDSKKWSTRGSESHELNEGGDEKKKRDSRKSSGFLNLIKSRSKSERPPTILMTEEPSSPKGAVRSPPVDCPRKDTKAAEHNGNSERIEEIKTPDSFEESQGEEIGKVERSDSKSSPQAGRRYGVQVMGSGLLAEMKAKQEKRAACAQKKLGNDAVSQDSSSPALSGVERSDGGGAVPKLHPGLPENRFGLGTPEKNTKAEPKAEAGSRSRSSSSTPTSPKPLLQSPKPSLAARPVIPQKPRTASRPDDIPDSPSSPKVALLPPVLKKVPSDKERDGQSSPQPSPRTFSQEVSRRSWGQQAQEYQEQKQRSSSKDGHQGSKSNDSGEEAEKEFIFV.

Residue Met1 is modified to N-acetylmethionine. Residue Ser122 is modified to Phosphoserine. LRR repeat units lie at residues 245–269 (SNRL…LASA), 275–298 (NSGL…SLSI), 304–327 (PKGL…SLSQ), 336–363 (ASTL…FLAQ), 391–418 (LQYL…SFKQ), 423–447 (SLAL…LLLG), 481–506 (IHNI…VWLS), 543–566 (ESPL…IINA), 570–593 (NTSL…MLAK), and 654–678 (LQKI…AYRL). Positions 710-734 (GDAIQEDLKSAERLMRDAKNSKTLL) form a coiled coil. Thr916 is modified (phosphothreonine). Disordered regions lie at residues 957–1000 (PFPS…QPTQ), 1036–1159 (KMDS…RRYG), and 1172–1371 (KAKQ…FIFV). One copy of the LRR 11 repeat lies at 958–981 (FPSLRQEKRSSGFISELPSEEGKK). Residues 958 to 1082 (FPSLRQEKRS…LIKSRSKSER (125 aa)) form an inhibits capping activity of CAPZA2 region. Ser968 is subject to Phosphoserine. Composition is skewed to basic and acidic residues over residues 977–986 (EEGKKLEHFT) and 1036–1061 (KMDS…EKKK). The interval 1055–1089 (GGDEKKKRDSRKSSGFLNLIKSRSKSERPPTILMT) is necessary for localization at the cell membrane. Phosphoserine is present on residues Ser1067 and Ser1094. Composition is skewed to basic and acidic residues over residues 1106-1130 (CPRK…KTPD) and 1139-1148 (EIGKVERSDS). A compositionally biased stretch (polar residues) spans 1190-1199 (AVSQDSSSPA). Thr1228 carries the phosphothreonine modification. Positions 1231-1243 (KNTKAEPKAEAGS) are enriched in basic and acidic residues. Over residues 1244–1265 (RSRSSSSTPTSPKPLLQSPKPS) the composition is skewed to low complexity. Phosphoserine is present on residues Ser1280, Ser1288, Ser1291, Ser1315, Ser1324, and Ser1331. Residues 1313 to 1326 (QSSPQPSPRTFSQE) show a composition bias toward polar residues. Positions 1340–1353 (QEQKQRSSSKDGHQ) are enriched in basic and acidic residues. Ser1360 carries the post-translational modification Phosphoserine.

It belongs to the CARMIL family. As to quaternary structure, homodimer. Interacts (via C-terminus) with heterodimer capping protein (CP); this interaction uncaps barbed ends capped by CP, enhances barbed-end actin polymerization and promotes lamellipodial formation and cell migration. Interacts with heterodimer capping protein (CP). Interacts with MYO1E. Interacts with TRIO. In terms of tissue distribution, expressed in lung, placenta, small intestine, liver, thymus, colon, skeletal muscle, heart and brain. Higher expression in kidney.

Its subcellular location is the cytoplasm. The protein localises to the cytoskeleton. The protein resides in the cell membrane. It is found in the cell projection. It localises to the lamellipodium. In terms of biological role, cell membrane-cytoskeleton-associated protein that plays a role in the regulation of actin polymerization at the barbed end of actin filaments. Prevents F-actin heterodimeric capping protein (CP) activity at the leading edges of migrating cells, and hence generates uncapped barbed ends and enhances actin polymerization, however, seems unable to nucleate filaments. Plays a role in lamellipodial protrusion formations and cell migration. The sequence is that of F-actin-uncapping protein LRRC16A from Homo sapiens (Human).